The following is a 154-amino-acid chain: Ribonuclease H (154 aa).

Positions 1–142 (MTKQVEIFTD…CDELAREGAN (142 aa)) constitute an RNase H type-1 domain. Mg(2+)-binding residues include Asp10, Glu48, Asp70, and Asp134.

This sequence belongs to the RNase H family. As to quaternary structure, monomer. Requires Mg(2+) as cofactor.

The protein resides in the cytoplasm. The enzyme catalyses Endonucleolytic cleavage to 5'-phosphomonoester.. Endonuclease that specifically degrades the RNA of RNA-DNA hybrids. The polypeptide is Ribonuclease H (Yersinia enterocolitica serotype O:8 / biotype 1B (strain NCTC 13174 / 8081)).